The sequence spans 284 residues: Putative transcription factor kapC (284 aa).

Residues Met-1–His-10 show a composition bias toward pro residues. The interval Met-1–Gln-121 is disordered. Over residues His-26 to Gln-40 the composition is skewed to low complexity. Pro residues predominate over residues Gln-41 to Met-54. The segment covering Asn-57–Ile-67 has biased composition (polar residues). Positions Pro-102 to Leu-165 constitute a bZIP domain. A basic motif region spans residues Leu-103 to Tyr-126. Low complexity predominate over residues Arg-108–Ala-118. The leucine-zipper stretch occupies residues Leu-130–Leu-161. The tract at residues Glu-174–Ser-284 is disordered. Over residues Pro-193–Ser-222 the composition is skewed to low complexity.

It belongs to the bZIP family.

It localises to the nucleus. Putative transcription factor. The protein is Putative transcription factor kapC (kapC) of Aspergillus oryzae (strain ATCC 42149 / RIB 40) (Yellow koji mold).